Here is a 316-residue protein sequence, read N- to C-terminus: Acetyl-coenzyme A carboxylase carboxyl transferase subunit alpha (316 aa).

One can recognise a CoA carboxyltransferase C-terminal domain in the interval 39–293; the sequence is KLEEKNAQLT…KKHLQANLTN (255 aa).

This sequence belongs to the AccA family. As to quaternary structure, acetyl-CoA carboxylase is a heterohexamer composed of biotin carboxyl carrier protein (AccB), biotin carboxylase (AccC) and two subunits each of ACCase subunit alpha (AccA) and ACCase subunit beta (AccD).

Its subcellular location is the cytoplasm. The catalysed reaction is N(6)-carboxybiotinyl-L-lysyl-[protein] + acetyl-CoA = N(6)-biotinyl-L-lysyl-[protein] + malonyl-CoA. It functions in the pathway lipid metabolism; malonyl-CoA biosynthesis; malonyl-CoA from acetyl-CoA: step 1/1. Its function is as follows. Component of the acetyl coenzyme A carboxylase (ACC) complex. First, biotin carboxylase catalyzes the carboxylation of biotin on its carrier protein (BCCP) and then the CO(2) group is transferred by the carboxyltransferase to acetyl-CoA to form malonyl-CoA. The chain is Acetyl-coenzyme A carboxylase carboxyl transferase subunit alpha from Coxiella burnetii (strain RSA 331 / Henzerling II).